Consider the following 130-residue polypeptide: Transcription antitermination protein NusB (130 aa).

The protein belongs to the NusB family.

In terms of biological role, involved in transcription antitermination. Required for transcription of ribosomal RNA (rRNA) genes. Binds specifically to the boxA antiterminator sequence of the ribosomal RNA (rrn) operons. This Bacillus cereus (strain ATCC 10987 / NRS 248) protein is Transcription antitermination protein NusB.